We begin with the raw amino-acid sequence, 75 residues long: Small ribosomal subunit protein bS18 (75 aa).

This sequence belongs to the bacterial ribosomal protein bS18 family. As to quaternary structure, part of the 30S ribosomal subunit. Forms a tight heterodimer with protein bS6.

In terms of biological role, binds as a heterodimer with protein bS6 to the central domain of the 16S rRNA, where it helps stabilize the platform of the 30S subunit. This is Small ribosomal subunit protein bS18 from Glaesserella parasuis serovar 5 (strain SH0165) (Haemophilus parasuis).